Reading from the N-terminus, the 189-residue chain is Putative biopolymer transport protein ExbB-like 1 (189 aa).

The next 3 membrane-spanning stretches (helical) occupy residues phenylalanine 14 to phenylalanine 34, leucine 99 to valine 119, and leucine 147 to leucine 167.

The protein belongs to the ExbB/TolQ family.

The protein localises to the cell inner membrane. This chain is Putative biopolymer transport protein ExbB-like 1, found in Helicobacter pylori (strain J99 / ATCC 700824) (Campylobacter pylori J99).